The primary structure comprises 146 residues: Anti-sigma F factor (146 aa).

It belongs to the anti-sigma-factor family.

The catalysed reaction is L-seryl-[protein] + ATP = O-phospho-L-seryl-[protein] + ADP + H(+). It catalyses the reaction L-threonyl-[protein] + ATP = O-phospho-L-threonyl-[protein] + ADP + H(+). In terms of biological role, binds to sigma F and blocks its ability to form an RNA polymerase holoenzyme (E-sigma F). Phosphorylates SpoIIAA on a serine residue. This phosphorylation may enable SpoIIAA to act as an anti-anti-sigma factor that counteracts SpoIIAB and thus releases sigma F from inhibition. The polypeptide is Anti-sigma F factor (Bacillus cereus (strain ATCC 14579 / DSM 31 / CCUG 7414 / JCM 2152 / NBRC 15305 / NCIMB 9373 / NCTC 2599 / NRRL B-3711)).